The sequence spans 469 residues: 3-isopropylmalate dehydratase large subunit (469 aa).

The [4Fe-4S] cluster site is built by cysteine 349, cysteine 410, and cysteine 413.

The protein belongs to the aconitase/IPM isomerase family. LeuC type 1 subfamily. As to quaternary structure, heterodimer of LeuC and LeuD. [4Fe-4S] cluster is required as a cofactor.

The catalysed reaction is (2R,3S)-3-isopropylmalate = (2S)-2-isopropylmalate. It functions in the pathway amino-acid biosynthesis; L-leucine biosynthesis; L-leucine from 3-methyl-2-oxobutanoate: step 2/4. Its function is as follows. Catalyzes the isomerization between 2-isopropylmalate and 3-isopropylmalate, via the formation of 2-isopropylmaleate. This chain is 3-isopropylmalate dehydratase large subunit, found in Neisseria meningitidis serogroup C (strain 053442).